A 618-amino-acid chain; its full sequence is DNA mismatch repair protein MutL (618 aa).

A disordered region spans residues 367-402 (EPTTAREPATPRYSGGASGGNGGRQTAGGWPHAQPG). Gly residues predominate over residues 382 to 392 (GASGGNGGRQT).

This sequence belongs to the DNA mismatch repair MutL/HexB family.

This protein is involved in the repair of mismatches in DNA. It is required for dam-dependent methyl-directed DNA mismatch repair. May act as a 'molecular matchmaker', a protein that promotes the formation of a stable complex between two or more DNA-binding proteins in an ATP-dependent manner without itself being part of a final effector complex. This chain is DNA mismatch repair protein MutL, found in Salmonella paratyphi A (strain ATCC 9150 / SARB42).